Consider the following 306-residue polypeptide: Phenylcoumaran benzylic ether reductase IRL1 (306 aa).

NADP(+) contacts are provided by residues 10 to 16, arginine 35, and lysine 44; that span reads GATGYIG. Lysine 132 functions as the Proton acceptor in the catalytic mechanism. Arginine 136 contacts NADP(+).

The protein belongs to the NmrA-type oxidoreductase family. Isoflavone reductase subfamily. In terms of tissue distribution, highly expressed in sclerotesta. Expressed in roots, and two-to-four year stems.

It catalyses the reaction (-)-dehydrodiconiferyl alcohol + NADPH + H(+) = (S)-isodihydrodehydrodiconiferyl alcohol + NADP(+). It carries out the reaction (+)-dehydrodiconiferyl alcohol + NADPH + H(+) = (R)-isodihydrodehydrodiconiferyl alcohol + NADP(+). The enzyme catalyses (2R,3S)-dihydrodehydrodiconiferyl alcohol + NADPH + H(+) = (S)-tetrahydrodehydrodiconiferyl alcohol + NADP(+). The catalysed reaction is (2S,3R)-dihydrodehydrodiconiferyl alcohol + NADPH + H(+) = (R)-tetrahydrodehydrodiconiferyl alcohol + NADP(+). Functionally, oxidoreductase involved in lignan biosynthesis. Catalyzes the NADPH-dependent reduction of phenylcoumaran benzylic ethers. Converts dehydrodiconiferyl alcohol (DDC) to isodihydrodehydrodiconiferyl alcohol (IDDDC), and dihydrodehydrodiconiferyl alcohol (DDDC) to tetrahydrodehydrodiconiferyl alcohol (TDDC). May regulate changes in lignin content and accumulation of flavonoids. This is Phenylcoumaran benzylic ether reductase IRL1 from Ginkgo biloba (Ginkgo).